The following is a 723-amino-acid chain: ESX-1 secretion-associated protein EspK (723 aa).

Disordered stretches follow at residues 175–360 (DLLQ…TPAA) and 393–451 (SGAG…GTPV). The segment covering 200–209 (TPGTPITPGT) has biased composition (low complexity). Pro residues predominate over residues 210–229 (PITPIPGAPVTPITPTPGTP). Residues 230–249 (VTPVTPGKPVTPVTPVKPGT) are compositionally biased toward low complexity. Composition is skewed to pro residues over residues 250-265 (PGEPTPITPVTPPVAP) and 274-308 (PVTPAPAPHPQPAPAPAPSPGPQPVTPATPGPSGP). 3 stretches are compositionally biased toward low complexity: residues 309–319 (ATPGTPGGEPA), 393–404 (SGAGSHAATGRA), and 412–426 (AAAPSTRAASARTAP). A compositionally biased stretch (basic and acidic residues) spans 432–444 (STDHIDKPDRSES).

The protein resides in the cytoplasm. In terms of biological role, may act as a chaperone that facilitates EspB secretion through an interaction with EccCb1. The chain is ESX-1 secretion-associated protein EspK from Mycobacterium tuberculosis (strain CDC 1551 / Oshkosh).